We begin with the raw amino-acid sequence, 609 residues long: Phosphoenolpyruvate carboxykinase [GTP] (609 aa).

Residues Arg81 and 220 to 222 (YGG) contribute to the substrate site. Positions 229 and 249 each coordinate Mn(2+). Ser271 is a substrate binding site. 272 to 277 (ACGKTN) is a GTP binding site. The active site involves Cys273. Asp296 is a binding site for Mn(2+). 387-389 (NSR) contributes to the substrate binding site. GTP-binding positions include Arg389, Arg420, and 515–518 (FGEN).

This sequence belongs to the phosphoenolpyruvate carboxykinase [GTP] family. As to quaternary structure, monomer. Requires Mn(2+) as cofactor.

Its subcellular location is the cytoplasm. The catalysed reaction is oxaloacetate + GTP = phosphoenolpyruvate + GDP + CO2. It functions in the pathway carbohydrate biosynthesis; gluconeogenesis. In terms of biological role, catalyzes the conversion of oxaloacetate (OAA) to phosphoenolpyruvate (PEP), the rate-limiting step in the metabolic pathway that produces glucose from lactate and other precursors derived from the citric acid cycle. The chain is Phosphoenolpyruvate carboxykinase [GTP] from Mycobacterium marinum (strain ATCC BAA-535 / M).